The primary structure comprises 281 residues: Orotidine 5'-phosphate decarboxylase (281 aa).

Lysine 94 (proton donor) is an active-site residue.

It belongs to the OMP decarboxylase family. Type 2 subfamily.

It catalyses the reaction orotidine 5'-phosphate + H(+) = UMP + CO2. It functions in the pathway pyrimidine metabolism; UMP biosynthesis via de novo pathway; UMP from orotate: step 2/2. The chain is Orotidine 5'-phosphate decarboxylase from Thermomicrobium roseum (strain ATCC 27502 / DSM 5159 / P-2).